A 229-amino-acid polypeptide reads, in one-letter code: Transmembrane emp24 domain-containing protein 5 (229 aa).

An N-terminal signal peptide occupies residues 1–27 (MGDKIWLPFPVLLLAALPPVLLPGAAG). The Lumenal segment spans residues 28 to 196 (FTPSLDSDFT…IQESNFDRVN (169 aa)). Residues 45 to 126 (RECFYQPMPL…EKVIFFELIL (82 aa)) form the GOLD domain. Residues 197–217 (FWSMVNLVVMVVVSAIQVYML) form a helical membrane-spanning segment. Over 218–229 (KSLFEDKRKSRT) the chain is Cytoplasmic.

It belongs to the EMP24/GP25L family. As to quaternary structure, interacts with TMED9 and TMED10.

Its subcellular location is the endoplasmic reticulum membrane. It is found in the golgi apparatus. The protein resides in the cis-Golgi network membrane. It localises to the endoplasmic reticulum-Golgi intermediate compartment membrane. Its function is as follows. Potential role in vesicular protein trafficking, mainly in the early secretory pathway. Required for the maintenance of the Golgi apparatus; involved in protein exchange between Golgi stacks during assembly. Probably not required for COPI-vesicle-mediated retrograde transport. This is Transmembrane emp24 domain-containing protein 5 (TMED5) from Pongo abelii (Sumatran orangutan).